Reading from the N-terminus, the 126-residue chain is Large ribosomal subunit protein uL22 (126 aa).

The protein belongs to the universal ribosomal protein uL22 family. As to quaternary structure, part of the 50S ribosomal subunit.

This protein binds specifically to 23S rRNA; its binding is stimulated by other ribosomal proteins, e.g. L4, L17, and L20. It is important during the early stages of 50S assembly. It makes multiple contacts with different domains of the 23S rRNA in the assembled 50S subunit and ribosome. In terms of biological role, the globular domain of the protein is located near the polypeptide exit tunnel on the outside of the subunit, while an extended beta-hairpin is found that lines the wall of the exit tunnel in the center of the 70S ribosome. The sequence is that of Large ribosomal subunit protein uL22 from Prochlorococcus marinus (strain NATL2A).